The primary structure comprises 135 residues: Poly [ADP-ribose] polymerase 1 (135 aa).

A PARP alpha-helical domain is found at 1–21 (QAKVEMLDNLLDIEVAYSLLK). The 106-residue stretch at 30–135 (DPIDINYEKL…APVTGYMFGK (106 aa)) folds into the PARP catalytic domain. Residues 104–106 (HGS), Gly-113, and Arg-120 contribute to the NAD(+) site. The active site involves Lys-135.

The protein belongs to the ARTD/PARP family. As to quaternary structure, homodimer; PARP-type zinc-fingers from separate parp1 molecules form a dimer module that specifically recognizes DNA strand breaks. Poly-ADP-ribosylated on serine, glutamate and aspartate residues by autocatalysis. Auto-ADP-ribosylation on serine takes place following interaction with HPF1. Auto poly-ADP-ribosylation on serine residues promotes its dissociation from chromatin.

The protein localises to the chromosome. Its subcellular location is the nucleus. It is found in the nucleolus. The protein resides in the cytoplasm. It localises to the cytosol. It carries out the reaction NAD(+) + (ADP-D-ribosyl)n-acceptor = nicotinamide + (ADP-D-ribosyl)n+1-acceptor + H(+).. The enzyme catalyses L-seryl-[protein] + NAD(+) = O-(ADP-D-ribosyl)-L-seryl-[protein] + nicotinamide + H(+). The catalysed reaction is L-aspartyl-[protein] + NAD(+) = 4-O-(ADP-D-ribosyl)-L-aspartyl-[protein] + nicotinamide. It catalyses the reaction L-glutamyl-[protein] + NAD(+) = 5-O-(ADP-D-ribosyl)-L-glutamyl-[protein] + nicotinamide. It carries out the reaction L-tyrosyl-[protein] + NAD(+) = O-(ADP-D-ribosyl)-L-tyrosyl-[protein] + nicotinamide + H(+). The enzyme catalyses L-histidyl-[protein] + NAD(+) = N(tele)-(ADP-D-ribosyl)-L-histidyl-[protein] + nicotinamide + H(+). ADP-ribosyltransferase activity is regulated via an allosteric activation mechanism. In absence of activation signal, parp1 is autoinhibited by the PARP alpha-helical domain (also named HD region), which prevents effective NAD(+)-binding. Activity is highly stimulated by signals, such as DNA strand breaks. Binding to damaged DNA unfolds the PARP alpha-helical domain, relieving autoinhibition. Poly-ADP-ribosyltransferase activity is tightly regulated and parp1 is removed from damaged chromatin following initial poly-ADP-ribosylation of chromatin to avoid prolonged residence (trapping) that has cytotoxic consequences. A number of factors or post-translational modifications (auto-poly-ADP-ribosylation) promote parp1 removal from chromatin. Poly-ADP-ribosyltransferase that mediates poly-ADP-ribosylation of proteins and plays a key role in DNA repair. Mediates glutamate, aspartate, serine, histidine or tyrosine ADP-ribosylation of proteins: the ADP-D-ribosyl group of NAD(+) is transferred to the acceptor carboxyl group of target residues and further ADP-ribosyl groups are transferred to the 2'-position of the terminal adenosine moiety, building up a polymer with an average chain length of 20-30 units. Serine ADP-ribosylation of proteins constitutes the primary form of ADP-ribosylation of proteins in response to DNA damage. Specificity for the different amino acids is conferred by interacting factors, such as hpf1 and nmnat1. Following interaction with hpf1, catalyzes serine ADP-ribosylation of target proteins; hpf1 confers serine specificity by completing the parp1 active site. Also catalyzes tyrosine ADP-ribosylation of target proteins following interaction with hpf1. Following interaction with nmnat1, catalyzes glutamate and aspartate ADP-ribosylation of target proteins; nmnat1 confers glutamate and aspartate specificity. Parp1 initiates the repair of DNA breaks: recognizes and binds DNA breaks within chromatin and recruits hpf1, licensing serine ADP-ribosylation of target proteins, such as histones (H2BS6ADPr and H3S10ADPr), thereby promoting decompaction of chromatin and the recruitment of repair factors leading to the reparation of DNA strand breaks. In addition to base excision repair (BER) pathway, also involved in double-strand breaks (DSBs) repair. Mediates the poly-ADP-ribosylation of a number of proteins. In addition to proteins, also able to ADP-ribosylate DNA: catalyzes ADP-ribosylation of DNA strand break termini containing terminal phosphates and a 2'-OH group in single- and double-stranded DNA, respectively. Parp1-mediated DNA repair in neurons plays a role in sleep: senses DNA damage in neurons and promotes sleep, facilitating efficient DNA repair. In addition to DNA repair, also involved in other processes, such as transcription regulation, programmed cell death, membrane repair, adipogenesis and innate immunity. Acts as a repressor of transcription: binds to nucleosomes and modulates chromatin structure in a manner similar to histone H1, thereby altering RNA polymerase II. Acts both as a positive and negative regulator of transcription elongation, depending on the context. Poly-ADP-ribose chains generated by parp1 also play a role in poly-ADP-ribose-dependent cell death, a process named parthanatos. Also acts as a negative regulator of the cGAS-STING pathway by mediating poly-ADP-ribosylation and inactivation of cgas. Acts as a negative regulator of adipogenesis by catalyzing poly ADP-ribosylation of histone H2B on 'Glu-35' (H2BE35ADPr). This is Poly [ADP-ribose] polymerase 1 (parp1) from Oncorhynchus masou (Cherry salmon).